We begin with the raw amino-acid sequence, 84 residues long: UPF0153 protein PA1578.1 (84 aa).

Belongs to the UPF0153 family.

In Pseudomonas aeruginosa (strain ATCC 15692 / DSM 22644 / CIP 104116 / JCM 14847 / LMG 12228 / 1C / PRS 101 / PAO1), this protein is UPF0153 protein PA1578.1.